Here is a 518-residue protein sequence, read N- to C-terminus: Efflux pump terJ (518 aa).

Residues 43-63 form a helical membrane-spanning segment; that stretch reads IAFIVVVCMAQLVSQAGLGQV. The N-linked (GlcNAc...) asparagine glycan is linked to asparagine 79. 12 helical membrane passes run 82 to 102, 112 to 132, 135 to 155, 177 to 197, 204 to 224, 244 to 264, 272 to 292, 311 to 331, 339 to 359, 364 to 384, 400 to 420, and 439 to 459; these read QLSW…LGAG, LLFT…AFAE, GPVF…FLLP, AFGS…ALAA, WGFW…IFWV, IAGC…LNMA, PYIY…GYIE, FVLA…FYGW, GISP…GFVA, GLIL…AAFC, WAQL…SFPA, and SLVA…GAIV. N-linked (GlcNAc...) asparagine glycosylation is present at asparagine 466. Residues 477–497 form a helical membrane-spanning segment; that stretch reads AWYLGVGLAASGIILTMFFAL.

Belongs to the major facilitator superfamily.

The protein resides in the cell membrane. In terms of biological role, efflux pump that might be required for efficient secretion of terrein or other secondary metabolies produced by the terrein genne cluster. This is Efflux pump terJ from Aspergillus terreus (strain NIH 2624 / FGSC A1156).